A 1780-amino-acid chain; its full sequence is Callose synthase 12 (1780 aa).

The Cytoplasmic portion of the chain corresponds to 1–302 (MSLRHRTVPP…ERRTFFYLYR (302 aa)). Residues 303–323 (SFDRLWVMLALFLQAAIIVAW) traverse the membrane as a helical segment. Residues 324 to 348 (EEKPDTSSVTRQLWNALKARDVQVR) lie on the Extracellular side of the membrane. A helical transmembrane segment spans residues 349–369 (LLTVFLTWSGMRLLQAVLDAA). The Cytoplasmic portion of the chain corresponds to 370–386 (SQYPLVSRETKRHFFRM). A helical membrane pass occupies residues 387–407 (LMKVIAAAVWIVAFTVLYTNI). Topologically, residues 408–427 (WKQKRQDRQWSNAATTKIYQ) are extracellular. A helical transmembrane segment spans residues 428–448 (FLYAVGAFLVPEILALALFII). The Cytoplasmic portion of the chain corresponds to 449 to 489 (PWMRNFLEETNWKIFFALTWWFQGKSFVGRGLREGLVDNIK). A helical transmembrane segment spans residues 490 to 510 (YSTFWIFVLATKFTFSYFLQV). Over 511-542 (KPMIKPSKLLWNLKDVDYEWHQFYGDSNRFSV) the chain is Extracellular. The helical transmembrane segment at 543–563 (ALLWLPVVLIYLMDIQIWYAI) threads the bilayer. Topologically, residues 564–1348 (YSSIVGAVVG…FFRMLSFFYT (785 aa)) are cytoplasmic. Residues 1349–1369 (TVGFFFNTMMVILTVYAFLWG) traverse the membrane as a helical segment. At 1370–1394 (RVYLALSGVEKSALADSTDTNAALG) the chain is on the extracellular side. A helical transmembrane segment spans residues 1395-1415 (VILNQQFIIQLGLFTALPMIV). At 1416–1421 (EWSLEE) the chain is on the cytoplasmic side. Residues 1422-1442 (GFLLAIWNFIRMQIQLSAVFY) traverse the membrane as a helical segment. At 1443–1489 (TFSMGTRAHYFGRTILHGGAKYRATGRGFVVEHKGFTENYRLYARSH) the chain is on the extracellular side. Residues 1490 to 1510 (FVKAIELGLILIVYASHSPIA) form a helical membrane-spanning segment. Over 1511-1516 (KDSLIY) the chain is Cytoplasmic. A helical transmembrane segment spans residues 1517 to 1537 (IAMTITSWFLVISWIMAPFVF). Residues 1538-1588 (NPSGFDWLKTVYDFEDFMNWIWYQGRISTKSEQSWEKWWYEEQDHLRNTGK) lie on the Extracellular side of the membrane. Residues 1589–1609 (AGLFVEIILVLRFFFFQYGIV) form a helical membrane-spanning segment. Topologically, residues 1610 to 1620 (YQLKIANGSTS) are cytoplasmic. The helical transmembrane segment at 1621–1641 (LFVYLFSWIYIFAIFVLFLVI) threads the bilayer. Residues 1642–1657 (QYARDKYSAKAHIRYR) lie on the Extracellular side of the membrane. The helical transmembrane segment at 1658–1678 (LVQFLLIVLAILVIVALLEFT) threads the bilayer. Residues 1679–1681 (HFS) are Cytoplasmic-facing. A helical transmembrane segment spans residues 1682 to 1702 (FIDIFTSLLAFIPTGWGILLI). The Extracellular portion of the chain corresponds to 1703-1728 (AQTQRKWLKNYTIFWNAVVSVARMYD). N-linked (GlcNAc...) asparagine glycosylation is present at asparagine 1712. Residues 1729–1749 (ILFGILIMVPVAFLSWMPGFQ) traverse the membrane as a helical segment. At 1750–1780 (SMQTRILFNEAFSRGLRIMQIVTGKKSKGDV) the chain is on the cytoplasmic side.

This sequence belongs to the glycosyltransferase 48 family. As to expression, highly expressed in flowers. Expressed at low levels in roots, leaves, stems, cauline leaves and siliques.

Its subcellular location is the cell membrane. The enzyme catalyses [(1-&gt;3)-beta-D-glucosyl](n) + UDP-alpha-D-glucose = [(1-&gt;3)-beta-D-glucosyl](n+1) + UDP + H(+). Functionally, involved in sporophytic and gametophytic development. Required for normal leaf development. During pollen formation, required for the formation of the callose wall separating the tetraspores of the tetrad (interstitial wall), but not for the callose wall surrounding the pollen mother cells (peripheral wall). Functionally redudant to CALS11 (GSL1). May play a role later in pollen grain maturation. Required for callose formation induced by wounding and pathogen attack. May interfere with salicylic acid-induced signaling pathway during defense response. During plant growth and development, callose is found as a transitory component of the cell plate in dividing cells, is a major component of pollen mother cell walls and pollen tubes, and is found as a structural component of plasmodesmatal canals. The sequence is that of Callose synthase 12 (CALS12) from Arabidopsis thaliana (Mouse-ear cress).